The following is a 396-amino-acid chain: Elongation factor Tu (396 aa).

Residues 11 to 205 enclose the tr-type G domain; that stretch reads KPHVNIGTIG…TVDEYVPTPE (195 aa). The G1 stretch occupies residues 20–27; that stretch reads GHVDHGKT. 20 to 27 serves as a coordination point for GTP; that stretch reads GHVDHGKT. Threonine 27 is a binding site for Mg(2+). The tract at residues 61–65 is G2; it reads GITIN. The G3 stretch occupies residues 82 to 85; that stretch reads DAPG. Residues 82 to 86 and 137 to 140 each bind GTP; these read DAPGH and NKTD. Residues 137–140 form a G4 region; sequence NKTD. Positions 175–177 are G5; that stretch reads SAL.

The protein belongs to the TRAFAC class translation factor GTPase superfamily. Classic translation factor GTPase family. EF-Tu/EF-1A subfamily. As to quaternary structure, monomer.

Its subcellular location is the cytoplasm. The enzyme catalyses GTP + H2O = GDP + phosphate + H(+). In terms of biological role, GTP hydrolase that promotes the GTP-dependent binding of aminoacyl-tRNA to the A-site of ribosomes during protein biosynthesis. The chain is Elongation factor Tu from Latilactobacillus sakei subsp. sakei (strain 23K) (Lactobacillus sakei subsp. sakei).